Reading from the N-terminus, the 348-residue chain is Centromere protein N-B (348 aa).

This sequence belongs to the CENP-N/CHL4 family.

The protein localises to the nucleus. The protein resides in the chromosome. Its subcellular location is the centromere. In terms of biological role, probable component of a centromeric complex involved in assembly of kinetochore proteins, mitotic progression and chromosome segregation. The sequence is that of Centromere protein N-B (cenpn-b) from Xenopus laevis (African clawed frog).